A 101-amino-acid polypeptide reads, in one-letter code: Small ribosomal subunit protein uS14 (101 aa).

Belongs to the universal ribosomal protein uS14 family. As to quaternary structure, part of the 30S ribosomal subunit. Contacts proteins S3 and S10.

Binds 16S rRNA, required for the assembly of 30S particles and may also be responsible for determining the conformation of the 16S rRNA at the A site. The sequence is that of Small ribosomal subunit protein uS14 from Rhizobium etli (strain CIAT 652).